The chain runs to 383 residues: uncharacterized protein (383 aa).

A helical transmembrane segment spans residues 6-26 (LFLFSCLYFIGGNLKALVLGI). One can recognise an ATP-grasp domain in the interval 131-303 (YKKLKNLGFN…LAMVLLNNKY (173 aa)).

The protein resides in the membrane. This is an uncharacterized protein from Methanocaldococcus jannaschii (strain ATCC 43067 / DSM 2661 / JAL-1 / JCM 10045 / NBRC 100440) (Methanococcus jannaschii).